Reading from the N-terminus, the 325-residue chain is Mitochondrial citrate transporter C (325 aa).

Solcar repeat units follow at residues 15–105, 117–208, and 221–310; these read ASPA…YKQM, KATF…LKAF, and LPSY…LKGK. Transmembrane regions (helical) follow at residues 21-41, 82-102, 121-141, 187-207, 221-241, and 282-303; these read LIAG…LDTI, GAVL…YESY, LAGL…MEVV, TALR…ELKA, LPSY…PFSN, and FYKG…TFTV.

The protein belongs to the mitochondrial carrier (TC 2.A.29) family.

It is found in the mitochondrion inner membrane. Functionally, mitochondrial transporter that does not mediate citrate export from mitochondria to cytoplasm. Its exact function has still to be determined. This Aspergillus niger (strain ATCC 1015 / CBS 113.46 / FGSC A1144 / LSHB Ac4 / NCTC 3858a / NRRL 328 / USDA 3528.7) protein is Mitochondrial citrate transporter C.